A 210-amino-acid chain; its full sequence is Ribonuclease HII (210 aa).

Residues 2–203 (SGVMGIDEAG…YKRVESEVKQ (202 aa)) enclose the RNase H type-2 domain. Residues Asp8, Glu9, and Asp99 each contribute to the a divalent metal cation site.

It belongs to the RNase HII family. The cofactor is Mn(2+). Mg(2+) is required as a cofactor.

It localises to the cytoplasm. The enzyme catalyses Endonucleolytic cleavage to 5'-phosphomonoester.. Its function is as follows. Endonuclease that specifically degrades the RNA of RNA-DNA hybrids. This is Ribonuclease HII from Methanopyrus kandleri (strain AV19 / DSM 6324 / JCM 9639 / NBRC 100938).